Reading from the N-terminus, the 433-residue chain is Aspartate--tRNA(Asp/Asn) ligase (433 aa).

L-aspartate is bound at residue glutamate 167. The segment at 189 to 192 (QLFK) is aspartate. Arginine 211 lines the L-aspartate pocket. ATP is bound by residues 211-213 (RAE), 219-221 (RHL), and glutamate 356. The Mg(2+) site is built by glutamate 356 and serine 359. Positions 359 and 363 each coordinate L-aspartate. Position 404-407 (404-407 (GGER)) interacts with ATP.

It belongs to the class-II aminoacyl-tRNA synthetase family. Type 2 subfamily. In terms of assembly, homodimer. Mg(2+) is required as a cofactor.

It localises to the cytoplasm. It carries out the reaction tRNA(Asx) + L-aspartate + ATP = L-aspartyl-tRNA(Asx) + AMP + diphosphate. Aspartyl-tRNA synthetase with relaxed tRNA specificity since it is able to aspartylate not only its cognate tRNA(Asp) but also tRNA(Asn). Reaction proceeds in two steps: L-aspartate is first activated by ATP to form Asp-AMP and then transferred to the acceptor end of tRNA(Asp/Asn). The protein is Aspartate--tRNA(Asp/Asn) ligase of Haloferax volcanii (Halobacterium volcanii).